The following is a 351-amino-acid chain: 3-dehydroquinate synthase (351 aa).

Residues 60 to 65, 94 to 98, 118 to 119, Lys131, Lys140, and 158 to 161 contribute to the NAD(+) site; these read DGEEYK, GVISD, TT, and FLKT. Residues Glu173, His239, and His256 each coordinate Zn(2+).

Belongs to the sugar phosphate cyclases superfamily. Dehydroquinate synthase family. It depends on Co(2+) as a cofactor. The cofactor is Zn(2+). NAD(+) is required as a cofactor.

The protein resides in the cytoplasm. The enzyme catalyses 7-phospho-2-dehydro-3-deoxy-D-arabino-heptonate = 3-dehydroquinate + phosphate. It participates in metabolic intermediate biosynthesis; chorismate biosynthesis; chorismate from D-erythrose 4-phosphate and phosphoenolpyruvate: step 2/7. Catalyzes the conversion of 3-deoxy-D-arabino-heptulosonate 7-phosphate (DAHP) to dehydroquinate (DHQ). The polypeptide is 3-dehydroquinate synthase (Campylobacter jejuni subsp. jejuni serotype O:23/36 (strain 81-176)).